The primary structure comprises 274 residues: Formamidopyrimidine-DNA glycosylase (274 aa).

Pro2 functions as the Schiff-base intermediate with DNA in the catalytic mechanism. The active-site Proton donor is the Glu3. The Proton donor; for beta-elimination activity role is filled by Lys57. Residues His92, Arg111, and Lys152 each contribute to the DNA site. An FPG-type zinc finger spans residues 237–271 (QVYGRKGEECNDCGSIIEAKVIGQRNSFYCPKCQR). The active-site Proton donor; for delta-elimination activity is Arg261.

It belongs to the FPG family. Monomer. The cofactor is Zn(2+).

The enzyme catalyses Hydrolysis of DNA containing ring-opened 7-methylguanine residues, releasing 2,6-diamino-4-hydroxy-5-(N-methyl)formamidopyrimidine.. The catalysed reaction is 2'-deoxyribonucleotide-(2'-deoxyribose 5'-phosphate)-2'-deoxyribonucleotide-DNA = a 3'-end 2'-deoxyribonucleotide-(2,3-dehydro-2,3-deoxyribose 5'-phosphate)-DNA + a 5'-end 5'-phospho-2'-deoxyribonucleoside-DNA + H(+). Involved in base excision repair of DNA damaged by oxidation or by mutagenic agents. Acts as a DNA glycosylase that recognizes and removes damaged bases. Has a preference for oxidized purines, such as 7,8-dihydro-8-oxoguanine (8-oxoG). Has AP (apurinic/apyrimidinic) lyase activity and introduces nicks in the DNA strand. Cleaves the DNA backbone by beta-delta elimination to generate a single-strand break at the site of the removed base with both 3'- and 5'-phosphates. The chain is Formamidopyrimidine-DNA glycosylase from Glaesserella parasuis serovar 5 (strain SH0165) (Haemophilus parasuis).